A 131-amino-acid chain; its full sequence is Profilin (131 aa).

This sequence belongs to the profilin family. As to quaternary structure, occurs in many kinds of cells as a complex with monomeric actin in a 1:1 ratio.

The protein resides in the cytoplasm. Its subcellular location is the cytoskeleton. Functionally, binds to actin and affects the structure of the cytoskeleton. At high concentrations, profilin prevents the polymerization of actin, whereas it enhances it at low concentrations. By binding to PIP2, it inhibits the formation of IP3 and DG. This Prunus dulcis (Almond) protein is Profilin.